The primary structure comprises 60 residues: DNA-directed RNA polymerase subunit Rpo6 (60 aa).

The protein belongs to the archaeal Rpo6/eukaryotic RPB6 RNA polymerase subunit family. In terms of assembly, part of the RNA polymerase complex.

It localises to the cytoplasm. It catalyses the reaction RNA(n) + a ribonucleoside 5'-triphosphate = RNA(n+1) + diphosphate. Functionally, DNA-dependent RNA polymerase (RNAP) catalyzes the transcription of DNA into RNA using the four ribonucleoside triphosphates as substrates. The chain is DNA-directed RNA polymerase subunit Rpo6 from Halobacterium salinarum (strain ATCC 700922 / JCM 11081 / NRC-1) (Halobacterium halobium).